A 617-amino-acid polypeptide reads, in one-letter code: Regulatory solute carrier protein family 1 member 1 (617 aa).

The span at M1 to D22 shows a compositional bias: polar residues. Disordered regions lie at residues M1–V106, E155–Q181, and K217–S237. Basic and acidic residues-rich tracts occupy residues S43 to A52 and S66 to S83. Composition is skewed to polar residues over residues T89–E103 and E155–P165. The involved in post-transcriptional down-regulation of SLC5A1 stretch occupies residues Q410–P412. The 41-residue stretch at I571–K611 folds into the UBA domain.

Interacts with YRDC. Expressed in small intestine, kidney and brain.

The protein localises to the cell membrane. The protein resides in the nucleus. It is found in the golgi apparatus. Its subcellular location is the trans-Golgi network. In terms of biological role, mediates transcriptional and post-transcriptional regulation of SLC5A1. Inhibits a dynamin and PKC-dependent exocytotic pathway of SLC5A1. Also involved in transcriptional regulation of SLC22A2. Exhibits glucose-dependent, short-term inhibition of SLC5A1 and SLC22A2 by inhibiting the release of vesicles from the trans-Golgi network. The protein is Regulatory solute carrier protein family 1 member 1 (RSC1A1) of Homo sapiens (Human).